The sequence spans 394 residues: Flap endonuclease 1 (394 aa).

Residues 1 to 103 (MGIKSLYQII…GELAKRTMRK (103 aa)) are N-domain. D34 serves as a coordination point for Mg(2+). R69 provides a ligand contact to DNA. Residue D85 coordinates Mg(2+). The interval 102–123 (RKAEAQEAAEEAKETGTAEDVE) is disordered. The interval 121-252 (DVEKFSRRTV…NTALKMIRDH (132 aa)) is I-domain. Positions 157, 159, 178, and 180 each coordinate Mg(2+). A DNA-binding site is contributed by E157. Positions 230 and 232 each coordinate DNA. D232 contributes to the Mg(2+) binding site. The interaction with PCNA stretch occupies residues 340-348 (QQSRLEGFF). Residues 349 to 394 (KPVAKTEQQKATAKRKAEEKAELAKKKKKEDAKAKRAMGAKPRGAR) form a disordered region. Residues 363-382 (RKAEEKAELAKKKKKEDAKA) are compositionally biased toward basic and acidic residues. Residues 383–394 (KRAMGAKPRGAR) are compositionally biased toward basic residues.

This sequence belongs to the XPG/RAD2 endonuclease family. FEN1 subfamily. In terms of assembly, interacts with PCNA. Three molecules of FEN1 bind to one PCNA trimer with each molecule binding to one PCNA monomer. PCNA stimulates the nuclease activity without altering cleavage specificity. It depends on Mg(2+) as a cofactor. In terms of processing, phosphorylated. Phosphorylation upon DNA damage induces relocalization to the nuclear plasma.

The protein localises to the nucleus. The protein resides in the nucleolus. It localises to the nucleoplasm. Its subcellular location is the mitochondrion. Functionally, structure-specific nuclease with 5'-flap endonuclease and 5'-3' exonuclease activities involved in DNA replication and repair. During DNA replication, cleaves the 5'-overhanging flap structure that is generated by displacement synthesis when DNA polymerase encounters the 5'-end of a downstream Okazaki fragment. It enters the flap from the 5'-end and then tracks to cleave the flap base, leaving a nick for ligation. Also involved in the long patch base excision repair (LP-BER) pathway, by cleaving within the apurinic/apyrimidinic (AP) site-terminated flap. Acts as a genome stabilization factor that prevents flaps from equilibrating into structures that lead to duplications and deletions. Also possesses 5'-3' exonuclease activity on nicked or gapped double-stranded DNA, and exhibits RNase H activity. Also involved in replication and repair of rDNA and in repairing mitochondrial DNA. The chain is Flap endonuclease 1 from Arthroderma otae (strain ATCC MYA-4605 / CBS 113480) (Microsporum canis).